The following is a 247-amino-acid chain: Pulmonary surfactant-associated protein A (247 aa).

The signal sequence occupies residues 1–19; the sequence is MWCSLALILILVTVSGIMC. An N-linked (GlcNAc...) asparagine glycan is attached at Asn-20. The 73-residue stretch at 27–99 folds into the Collagen-like domain; sequence GSPGIPGTPG…PGERGPPGLP (73 aa). 4-hydroxyproline is present on residues Pro-29, Pro-32, Pro-35, Pro-41, Pro-53, Pro-56, Pro-62, Pro-66, and Pro-69. Residues 32 to 101 form a disordered region; sequence PGTPGSHGLP…ERGPPGLPAS (70 aa). Basic and acidic residues predominate over residues 41–50; that stretch reads PGRDGRDGVK. A compositionally biased stretch (pro residues) spans 53 to 64; that stretch reads PGPPGPMGPPGV. Residues 83 to 92 show a composition bias toward basic and acidic residues; that stretch reads ERGDKGDPGE. Residues 131 to 247 form the C-type lectin domain; sequence LAVGDKVFAT…LQSRLTICEF (117 aa). Cystine bridges form between Cys-154-Cys-245 and Cys-223-Cys-237. Asn-206 carries an N-linked (GlcNAc...) asparagine glycan. 4 residues coordinate Ca(2+): Glu-214, Arg-216, Asn-233, and Asp-234.

Belongs to the SFTPA family. Oligomeric complex of 6 set of homotrimers.

It localises to the secreted. It is found in the extracellular space. The protein localises to the extracellular matrix. Its subcellular location is the surface film. Its function is as follows. In presence of calcium ions, it binds to surfactant phospholipids and contributes to lower the surface tension at the air-liquid interface in the alveoli of the mammalian lung and is essential for normal respiration. Enhances the expression of MYO18A/SP-R210 on alveolar macrophages. The chain is Pulmonary surfactant-associated protein A (SFTPA1) from Cavia porcellus (Guinea pig).